Reading from the N-terminus, the 394-residue chain is Protein BUR2 (394 aa).

Disordered regions lie at residues 1-32 and 372-394; these read MVLS…GNPQ and MSER…KPRF. Polar residues predominate over residues 9–32; that stretch reads IANSQPSGNGKTSLDIKQNEGNPQ. Basic and acidic residues predominate over residues 372–381; that stretch reads MSERSIKRPS.

As to quaternary structure, belongs to the BUR kinase complex.

The protein resides in the nucleus. Its function is as follows. Component of the BUR kinase complex involved in transcription regulation. This complex phosphorylates the UBC2/RAD6 ubiquitin-conjugating enzyme (E2), leading to monoubiquitination of histone H2B and the silencing of telomeric-associated genes. Also required for histone H3 methylation. Necessary for the recovery from pheromone-induced growth arrest in the cell cycle G1 phase. The kinase activity of the complex requires the presence of BUR2. Overexpression of BUR2 interferes with mitotic chromosome segregation. The sequence is that of Protein BUR2 (BUR2) from Kluyveromyces lactis (strain ATCC 8585 / CBS 2359 / DSM 70799 / NBRC 1267 / NRRL Y-1140 / WM37) (Yeast).